A 248-amino-acid polypeptide reads, in one-letter code: ATP synthase subunit a (248 aa).

A run of 7 helical transmembrane segments spans residues 29 to 49 (AMLTTCVSLSFFLFLFYCLFS), 85 to 105 (VFPFLFVIFSFILISNVQGLV), 115 to 135 (LIQTMVLALTVFIGVIIIVLA), 143 to 163 (LFLPGGTSIVLAFLLVPIEIV), 176 to 196 (LFANMMAGHTLLKVIAAVAWA), 201 to 221 (GGLLLIAHIVPLGVLVILFGL), and 227 to 247 (LIQAYVFTILSCIYINDAIVL).

The protein belongs to the ATPase A chain family. F-type ATPases have 2 components, CF(1) - the catalytic core - and CF(0) - the membrane proton channel. CF(1) has five subunits: alpha(3), beta(3), gamma(1), delta(1), epsilon(1). CF(0) has three main subunits: a, b and c.

Its subcellular location is the mitochondrion inner membrane. Its function is as follows. Mitochondrial membrane ATP synthase (F(1)F(0) ATP synthase or Complex V) produces ATP from ADP in the presence of a proton gradient across the membrane which is generated by electron transport complexes of the respiratory chain. F-type ATPases consist of two structural domains, F(1) - containing the extramembraneous catalytic core and F(0) - containing the membrane proton channel, linked together by a central stalk and a peripheral stalk. During catalysis, ATP synthesis in the catalytic domain of F(1) is coupled via a rotary mechanism of the central stalk subunits to proton translocation. Key component of the proton channel; it may play a direct role in the translocation of protons across the membrane. In Pylaiella littoralis (Seaweed), this protein is ATP synthase subunit a (ATP6).